Here is a 408-residue protein sequence, read N- to C-terminus: Putative F-box protein At1g53550 (408 aa).

Residues 29 to 74 (TCYFDPIPVDLVINILSRLSLECIARCRCVSKLWSSIIRRPNYNQL) form the F-box domain.

In Arabidopsis thaliana (Mouse-ear cress), this protein is Putative F-box protein At1g53550.